A 245-amino-acid chain; its full sequence is Thiopurine S-methyltransferase (245 aa).

An S-adenosyl-L-methionine-binding site is contributed by 29-40; sequence WQEKWVSRRIGF. F40 provides a ligand contact to substrate. K58 is modified (N6-acetyllysine). S-adenosyl-L-methionine-binding residues include L69, E90, and R152.

The protein belongs to the class I-like SAM-binding methyltransferase superfamily. TPMT family. As to quaternary structure, monomer.

It localises to the cytoplasm. It catalyses the reaction S-adenosyl-L-methionine + a thiopurine = S-adenosyl-L-homocysteine + a thiopurine S-methylether.. This Canis lupus familiaris (Dog) protein is Thiopurine S-methyltransferase (TPMT).